Consider the following 223-residue polypeptide: uncharacterized protein (223 aa).

The signal sequence occupies residues M1–A22. The VWFA domain occupies D30–R204. The tract at residues A199–D223 is disordered.

This is an uncharacterized protein from Treponema pallidum (strain Nichols).